The chain runs to 724 residues: Eukaryotic elongation factor 2 kinase (724 aa).

Residue alanine 2 is modified to N-acetylalanine. A disordered region spans residues 11 to 35 (EGVDGGGSSGAGRHGDSDTDSDDDE). The segment covering 13–22 (VDGGGSSGAG) has biased composition (gly residues). 4 positions are modified to phosphoserine: serine 18, serine 27, serine 70, and serine 73. Serine 77 bears the Phosphoserine; by autocatalysis and TRPM7 mark. Residues 80–93 (FKEAWKHAIEKAKH) form a calmodulin-binding region. The region spanning 115–325 (RYNAVTGEWL…ICQSMGLAPF (211 aa)) is the Alpha-type protein kinase domain. Phosphoserine is present on serine 242. 295 to 301 (GDGNLGV) lines the ATP pocket. Threonine 347 bears the Phosphothreonine mark. Threonine 352 is subject to Phosphothreonine; by autocatalysis. Residues 353 to 476 (EEKCGSPRIR…PESDEDSLGS (124 aa)) form a disordered region. A Phosphoserine; by MAPK13 and CDK1 modification is found at serine 358. The segment covering 364–376 (LSGSRPPLLLRLS) has biased composition (low complexity). A phosphoserine mark is found at serine 365 and serine 391. The segment covering 385-403 (SDVTFDSLPSSPSSATPHS) has biased composition (polar residues). Serine 397 is subject to Phosphoserine; by AMPK. Composition is skewed to basic and acidic residues over residues 421–435 (GPRD…RDSE) and 444–468 (SEKR…RRPE). Serine 434, serine 444, serine 469, serine 473, and serine 476 each carry phosphoserine. At serine 499 the chain carries Phosphoserine; by PKA.

It belongs to the protein kinase superfamily. Alpha-type protein kinase family. Monomer or homodimer. Interacts with Calmodulin/CALM1; this interaction is strictly required for phosphorylation activity. In terms of processing, the N-terminus is blocked. Post-translationally, autophosphorylated at multiple residues, Thr-347 being the major site. Phosphorylated by AMP-activated protein kinase AMPK at Ser-397 leading to EEF2K activation and protein synthesis inhibition. Phosphorylated by TRPM7 at Ser-77 resulting in improved protein stability, higher EE2F phosphorylated and subsequently reduced rate of protein synthesis. Phosphorylation by other kinases such as CDK1 and MAPK13 at Ser-358 or RPS6KA1 and RPS6KB1 at Ser-365 instead decrease EEF2K activity and promote protein synthesis. As to expression, widely expressed, with high levels in reticulocytes and skeletal muscle.

The enzyme catalyses [translation elongation factor 2] + ATP = [translation elongation factor 2]-phosphate + ADP + H(+). Its activity is regulated as follows. Undergoes calcium/calmodulin-dependent intramolecular autophosphorylation, and this results in it becoming partially calcium/calmodulin-independent. Its function is as follows. Threonine kinase that regulates protein synthesis by controlling the rate of peptide chain elongation. Upon activation by a variety of upstream kinases including AMPK or TRPM7, phosphorylates the elongation factor EEF2 at a single site, renders it unable to bind ribosomes and thus inactive. In turn, the rate of protein synthesis is reduced. The protein is Eukaryotic elongation factor 2 kinase of Rattus norvegicus (Rat).